A 482-amino-acid chain; its full sequence is Protein trichome birefringence-like 15 (482 aa).

Residues 109–129 (GSVSLSLIILILLVTTLLVSA) traverse the membrane as a helical; Signal-anchor for type II membrane protein segment. Residues 217–219 (GDS) carry the GDS motif motif. The DCXHWCLPGXXDXWN motif motif lies at 461–475 (DCLHWCLPGIPDTWN).

This sequence belongs to the PC-esterase family. TBL subfamily.

It is found in the membrane. May act as a bridging protein that binds pectin and other cell wall polysaccharides. Probably involved in maintaining esterification of pectins. May be involved in the specific O-acetylation of cell wall polymers. The sequence is that of Protein trichome birefringence-like 15 (TBL15) from Arabidopsis thaliana (Mouse-ear cress).